Reading from the N-terminus, the 565-residue chain is FAD-linked oxidoreductase ZEB1 (565 aa).

The first 27 residues, 1-27 (MKLSPSKYLPVLLGTLSLTIANPSADC), serve as a signal peptide directing secretion. Asn46, Asn82, and Asn100 each carry an N-linked (GlcNAc...) asparagine glycan. The FAD-binding PCMH-type domain occupies 115 to 293 (LGNYVSYAIA…ISMTVKAHPG (179 aa)). N-linked (GlcNAc...) asparagine glycans are attached at residues Asn340, Asn352, and Asn421.

This sequence belongs to the oxygen-dependent FAD-linked oxidoreductase family.

The protein operates within mycotoxin biosynthesis. In terms of biological role, FAD-linked oxidoreductase; part of the gene cluster that mediates the biosynthesis of zearalenone (ZEA), a nonsteroid estrogen that is a contaminant of cereal grains and causes estrogenic disorders in humans and animals. The ZEA backbone is synthesized from a single acetyl-CoA molecule and eight malonyl-CoA molecules. The reducing polyketide synthase ZEA2 is proposed to synthesize a reduced hexaketide intermediate by using different combinations of its reductive domains during each round of condensation. The hexaketide thioester is then transacylated to the non-reducing polyketide synthase ZEA1 and is further condensed with three malonyl-CoAs without reductive tailoring to yield a mixed reduced/unreduced nonaketide. ZEA1 must be able to interact with ZEA2 to facilitate starter-unit acyltransfer and initiate polyketide biosynthesis. ZEA1 also mediates the required C2-C7 cyclization to form the resorcylate core and catalyzes the formation of the macrolactone. ZEB1 is then responsible for the chemical conversion of beta-zearalenonol (beta-ZOL) to ZEA in the biosynthetic pathway. This Gibberella zeae (strain ATCC MYA-4620 / CBS 123657 / FGSC 9075 / NRRL 31084 / PH-1) (Wheat head blight fungus) protein is FAD-linked oxidoreductase ZEB1.